The sequence spans 137 residues: Phospholipase A2 group V (137 aa).

Positions 1 to 20 (MKRLLTLAWFLACSVPAVPG) are cleaved as a signal peptide. 6 cysteine pairs are disulfide-bonded: cysteine 46-cysteine 137, cysteine 48-cysteine 64, cysteine 63-cysteine 117, cysteine 70-cysteine 110, cysteine 79-cysteine 103, and cysteine 97-cysteine 108. Residues tyrosine 47, glycine 49, and glycine 51 each coordinate Ca(2+). Histidine 67 is a catalytic residue. Aspartate 68 is a Ca(2+) binding site. Aspartate 111 is an active-site residue.

Belongs to the phospholipase A2 family. Ca(2+) is required as a cofactor. This enzyme lacks one of the seven disulfide bonds found in similar PA2 proteins.

It is found in the secreted. Its subcellular location is the cell membrane. The protein resides in the cytoplasmic vesicle. It localises to the phagosome. The protein localises to the recycling endosome. It is found in the golgi apparatus. Its subcellular location is the cis-Golgi network. The protein resides in the trans-Golgi network. The enzyme catalyses a 1,2-diacyl-sn-glycero-3-phosphocholine + H2O = a 1-acyl-sn-glycero-3-phosphocholine + a fatty acid + H(+). It catalyses the reaction 1-hexadecanoyl-2-(9Z-octadecenoyl)-sn-glycero-3-phosphocholine + H2O = 1-hexadecanoyl-sn-glycero-3-phosphocholine + (9Z)-octadecenoate + H(+). It carries out the reaction 1-hexadecanoyl-2-(5Z,8Z,11Z,14Z-eicosatetraenoyl)-sn-glycero-3-phosphocholine + H2O = 1-hexadecanoyl-sn-glycero-3-phosphocholine + (5Z,8Z,11Z,14Z)-eicosatetraenoate + H(+). The catalysed reaction is 1-hexadecanoyl-2-(9Z,12Z-octadecadienoyl)-sn-glycero-3-phosphoethanolamine + H2O = 1-hexadecanoyl-sn-glycero-3-phosphoethanolamine + (9Z,12Z)-octadecadienoate + H(+). The enzyme catalyses 1-hexadecanoyl-2-(5Z,8Z,11Z,14Z-eicosatetraenoyl)-sn-glycero-3-phosphoethanolamine + H2O = 1-hexadecanoyl-sn-glycero-3-phosphoethanolamine + (5Z,8Z,11Z,14Z)-eicosatetraenoate + H(+). It catalyses the reaction 1-octadecanoyl-2-(5Z,8Z,11Z,14Z-eicosatetraenoyl)-sn-glycero-3-phospho-(1D-myo-inositol) + H2O = 1-octadecanoyl-sn-glycero-3-phospho-(1D-myo-inositol) + (5Z,8Z,11Z,14Z)-eicosatetraenoate + H(+). It carries out the reaction 1-hexadecanoyl-2-(9Z-octadecenoyl)-sn-glycero-3-phosphoglycerol + H2O = 1-hexadecanoyl-sn-glycero-3-phosphoglycerol + (9Z)-octadecenoate + H(+). The catalysed reaction is N-hexadecanoyl-1,2-di-(9Z-octadecenoyl)-sn-glycero-3-phosphoethanolamine + H2O = N-hexadecanoyl-1-(9Z-octadecenoyl)-sn-glycero-3-phosphoethanolamine + (9Z)-octadecenoate + H(+). The enzyme catalyses 1'-[1,2-di-(9Z-octadecenoyl)-sn-glycero-3-phospho]-3'-[1-(9Z-octadecenoyl)-sn-glycero-3-phospho]-glycerol + H2O = 1',3'-bis-[1-(9Z-octadecenoyl)-sn-glycero-3-phospho]-glycerol + (9Z)-octadecenoate + H(+). It catalyses the reaction 1',3'-bis[1,2-di-(9Z-octadecenoyl)-sn-glycero-3-phospho]-glycerol + H2O = 1'-[1,2-di-(9Z-octadecenoyl)-sn-glycero-3-phospho]-3'-[1-(9Z-octadecenoyl)-sn-glycero-3-phospho]-glycerol + (9Z)-octadecenoate + H(+). Its pathway is lipid metabolism; phospholipid metabolism. It participates in lipid metabolism; leukotriene B4 biosynthesis. The protein operates within lipid metabolism; leukotriene C4 biosynthesis. Functionally, secretory calcium-dependent phospholipase A2 that primarily targets extracellular phospholipids. Hydrolyzes the ester bond of the fatty acyl group attached at sn-2 position of phospholipids (phospholipase A2 activity), preferentially releasing fatty acyl groups with a low degree of unsaturation such as oleoyl (C18:1) and linoleoyl (C18:2) groups. Hydrolyzes low-density lipoprotein (LDL) phospholipids releasing unsaturated fatty acids that drive macrophage polarization toward an M2 phenotype. May act in an autocrine and paracrine manner. Contributes to lipid remodeling of cellular membranes at different subcellular locations and generation of lipid mediators involved in pathogen clearance. Cleaves sn-2 fatty acyl chains of cardiolipin, a major component of the inner membrane of mitochondria and bacterial membranes. Promotes phagocytosis of bacteria in macrophages through production of lysophosphatidylethanolamines. Displays bactericidal activity against Gram-positive bacteria by directly hydrolyzing phospholipids of the bacterial membrane. Promotes phagocytosis and killing of ingested fungi likely through controlling phagosome-lysosome fusion and phagosome maturation. Plays a role in biosynthesis of cysteinyl leukotrienes (CysLTs) in myeloid cells. In eosinophils, triggers perinuclear arachidonate release and LTC4 synthesis in a PLA2G4A-independent way. In neutrophils, amplifies CysLTs biosynthesis initiated by PLA2G4A. Promotes immune complex clearance in macrophages via stimulating synthesis of CysLTs, which act through CYSLTR1 to trigger phagocytosis. May regulate antigen processing in antigen-presenting cells. In pulmonary macrophages regulates IL33 production required for activation of group 2 innate lymphoid cells. May play a role in the biosynthesis of N-acyl ethanolamines that regulate energy metabolism. Hydrolyzes N-acyl phosphatidylethanolamines to N-acyl lysophosphatidylethanolamines, which are further cleaved by a lysophospholipase D to release N-acyl ethanolamines. In Rattus norvegicus (Rat), this protein is Phospholipase A2 group V (Pla2g5).